The primary structure comprises 608 residues: DNA mismatch repair protein MutL (608 aa).

The interval 363-397 is disordered; it reads ASLAMARKPDPPRFHETARPQPDPRHTPGTESVSV. Positions 369–390 are enriched in basic and acidic residues; sequence RKPDPPRFHETARPQPDPRHTP.

It belongs to the DNA mismatch repair MutL/HexB family.

This protein is involved in the repair of mismatches in DNA. It is required for dam-dependent methyl-directed DNA mismatch repair. May act as a 'molecular matchmaker', a protein that promotes the formation of a stable complex between two or more DNA-binding proteins in an ATP-dependent manner without itself being part of a final effector complex. The polypeptide is DNA mismatch repair protein MutL (Pelobacter propionicus (strain DSM 2379 / NBRC 103807 / OttBd1)).